The chain runs to 274 residues: Thymidylate synthase (274 aa).

Residue Arg21 coordinates dUMP. His51 serves as a coordination point for (6R)-5,10-methylene-5,6,7,8-tetrahydrofolate. 123 to 124 provides a ligand contact to dUMP; that stretch reads RR. The active-site Nucleophile is Cys156. DUMP is bound by residues 176 to 179, Asn187, and 217 to 219; these read RSAD and HIY. Asp179 contributes to the (6R)-5,10-methylene-5,6,7,8-tetrahydrofolate binding site. A (6R)-5,10-methylene-5,6,7,8-tetrahydrofolate-binding site is contributed by Ser273.

This sequence belongs to the thymidylate synthase family. Bacterial-type ThyA subfamily. As to quaternary structure, homodimer.

It is found in the cytoplasm. The enzyme catalyses dUMP + (6R)-5,10-methylene-5,6,7,8-tetrahydrofolate = 7,8-dihydrofolate + dTMP. It functions in the pathway pyrimidine metabolism; dTTP biosynthesis. Its function is as follows. Catalyzes the reductive methylation of 2'-deoxyuridine-5'-monophosphate (dUMP) to 2'-deoxythymidine-5'-monophosphate (dTMP) while utilizing 5,10-methylenetetrahydrofolate (mTHF) as the methyl donor and reductant in the reaction, yielding dihydrofolate (DHF) as a by-product. This enzymatic reaction provides an intracellular de novo source of dTMP, an essential precursor for DNA biosynthesis. This chain is Thymidylate synthase, found in Francisella philomiragia subsp. philomiragia (strain ATCC 25017 / CCUG 19701 / FSC 153 / O#319-036).